Here is a 308-residue protein sequence, read N- to C-terminus: Ribonuclease HIII (308 aa).

The RNase H type-2 domain occupies 92-308; it reads DNHIGSDEAG…ANTQKAQKLL (217 aa). 3 residues coordinate a divalent metal cation: Asp98, Glu99, and Asp204.

This sequence belongs to the RNase HII family. RnhC subfamily. Mn(2+) is required as a cofactor. It depends on Mg(2+) as a cofactor.

Its subcellular location is the cytoplasm. The catalysed reaction is Endonucleolytic cleavage to 5'-phosphomonoester.. Functionally, endonuclease that specifically degrades the RNA of RNA-DNA hybrids. In Oceanobacillus iheyensis (strain DSM 14371 / CIP 107618 / JCM 11309 / KCTC 3954 / HTE831), this protein is Ribonuclease HIII.